The sequence spans 310 residues: Olfactory receptor 8B12 (310 aa).

At 1–24 (MAAKNSSVTEFILEGLTHQPGLRI) the chain is on the extracellular side. N5 carries N-linked (GlcNAc...) asparagine glycosylation. Residues 25-45 (PLFFLFLGFYTVTVVGNLGLI) traverse the membrane as a helical segment. Residues 46–53 (TLIGLNSH) are Cytoplasmic-facing. A helical transmembrane segment spans residues 54 to 74 (LHTPMYFFLFNLSLIDFCFST). Residues 75-98 (TITPKMLMSFVSRKNIISFTGCMT) are Extracellular-facing. C96 and C188 are disulfide-bonded. The helical transmembrane segment at 99 to 119 (QLFFFCFFVVSESFILSAMAY) threads the bilayer. The Cytoplasmic portion of the chain corresponds to 120-138 (DRYVAICNPLLYTVTMSCQ). A helical membrane pass occupies residues 139 to 159 (VCLLLLLGAYGMGFAGAMAHT). Residues 160–196 (GSIMNLTFCADNLVNHFMCDILPLLELSCNSSYMNEL) lie on the Extracellular side of the membrane. N164 and N189 each carry an N-linked (GlcNAc...) asparagine glycan. A helical transmembrane segment spans residues 197 to 216 (VVFIVVAVDVGMPIVTVFIS). Over 217–236 (YALILSSILHNSSTEGRSKA) the chain is Cytoplasmic. A helical transmembrane segment spans residues 237-257 (FSTCSSHIIVVSLFFGSGAFM). The Extracellular portion of the chain corresponds to 258–270 (YLKPLSILPLEQG). The helical transmembrane segment at 271–291 (KVSSLFYTIIVPVLNPLIYSL) threads the bilayer. Residues 292–310 (RNKDVKVALRRTLGRKIFS) are Cytoplasmic-facing.

Belongs to the G-protein coupled receptor 1 family.

It localises to the cell membrane. In terms of biological role, odorant receptor. The polypeptide is Olfactory receptor 8B12 (OR8B12) (Homo sapiens (Human)).